A 426-amino-acid polypeptide reads, in one-letter code: MHKVTSEELFQRALKVAPGGVHSPVRSFKGLDRAPVFFKKAEGAYLTSVEDKKYIDFCQSFGPLILGHLDAEVKEEVHRMVDTAWTFGATEIYSLELAEWITSTLPFMEKLRFVSSGTEAVMSALRVARAATGRTKILKFEGCYHGHVDNLLVKAGSGLAGTAASSSAGIPAEVAAHTVVAPLDDEAKLAEVFAAQGKDIAAVIIEPLPANYGLLVQRPEFLKKVAELCEKNGSLLIFDEVISGFRVGLGGMVEKTGIRPDLVTYGKIIGGGFPVGCYGGKAELMNMVAPSGDVYQAGTLSANPIGMRAGLTTLKKMQRVDGWNVLEQRTKKFTDAIKAGFVKKGVNLEISQVASLFWIHGPTASPIRSIDHIPANQGGNFKNLFLKALDKGVYLAPNAYEVGFVSLAHSDELLEQAAQIIVDAAE.

The residue at position 267 (K267) is an N6-(pyridoxal phosphate)lysine.

Belongs to the class-III pyridoxal-phosphate-dependent aminotransferase family. HemL subfamily. Homodimer. It depends on pyridoxal 5'-phosphate as a cofactor.

It localises to the cytoplasm. It carries out the reaction (S)-4-amino-5-oxopentanoate = 5-aminolevulinate. It participates in porphyrin-containing compound metabolism; protoporphyrin-IX biosynthesis; 5-aminolevulinate from L-glutamyl-tRNA(Glu): step 2/2. This Bdellovibrio bacteriovorus (strain ATCC 15356 / DSM 50701 / NCIMB 9529 / HD100) protein is Glutamate-1-semialdehyde 2,1-aminomutase.